The sequence spans 156 residues: Small ribosomal subunit protein uS7 (156 aa).

Belongs to the universal ribosomal protein uS7 family. Part of the 30S ribosomal subunit. Contacts proteins S9 and S11.

One of the primary rRNA binding proteins, it binds directly to 16S rRNA where it nucleates assembly of the head domain of the 30S subunit. Is located at the subunit interface close to the decoding center, probably blocks exit of the E-site tRNA. The protein is Small ribosomal subunit protein uS7 of Acidobacterium capsulatum (strain ATCC 51196 / DSM 11244 / BCRC 80197 / JCM 7670 / NBRC 15755 / NCIMB 13165 / 161).